A 178-amino-acid chain; its full sequence is MHSSALLCFLVFLAGVGASRHQSTLSEDNCTHFSVSLPHMLRELRAAFGKVKTFFQTKDELHSILLTRSLLEDFKGYLGCQALSEMIQFYLEEVMPQAENEDPDIKQHVNSLGEKLKTLRLRLRRCHRFLPCENKSKVVEQVKSTFSKLQEKGVYKAMGEFDIFINYIEAYMTMKMKI.

A signal peptide spans 1-18; the sequence is MHSSALLCFLVFLAGVGA. N-linked (GlcNAc...) asparagine glycosylation occurs at N29. Cystine bridges form between C30/C126 and C80/C132. The N-linked (GlcNAc...) asparagine glycan is linked to N134.

The protein belongs to the IL-10 family. Homodimer. Interacts with IL10RA and IL10RB.

It localises to the secreted. Its function is as follows. Major immune regulatory cytokine that acts on many cells of the immune system where it has profound anti-inflammatory functions, limiting excessive tissue disruption caused by inflammation. Mechanistically, IL10 binds to its heterotetrameric receptor comprising IL10RA and IL10RB leading to JAK1 and STAT2-mediated phosphorylation of STAT3. In turn, STAT3 translocates to the nucleus where it drives expression of anti-inflammatory mediators. Targets antigen-presenting cells (APCs) such as macrophages and monocytes and inhibits their release of pro-inflammatory cytokines including granulocyte-macrophage colony-stimulating factor /GM-CSF, granulocyte colony-stimulating factor/G-CSF, IL-1 alpha, IL-1 beta, IL-6, IL-8 and TNF-alpha. Also interferes with antigen presentation by reducing the expression of MHC-class II and co-stimulatory molecules, thereby inhibiting their ability to induce T cell activation. In addition, controls the inflammatory response of macrophages by reprogramming essential metabolic pathways including mTOR signaling. In Felis catus (Cat), this protein is Interleukin-10 (IL10).